The following is a 1031-amino-acid chain: Kinesin heavy chain (1031 aa).

The region spanning 8-325 (NIKVVCRVRP…LMFGQRAKTI (318 aa)) is the Kinesin motor domain. 84–91 (GQTSSGKT) contacts ATP. The stretch at 393–857 (PKQMTVHVSE…RDNADLRCEL (465 aa)) forms a coiled coil. The span at 673–686 (TDQEDKKREEEDKM) shows a compositional bias: basic and acidic residues. Disordered regions lie at residues 673–692 (TDQE…ATEM) and 906–1031 (RNFA…EQGS). The interval 858–1031 (PKLERRLRAT…PLTTSGEQGS (174 aa)) is globular. The segment covering 932 to 949 (GSTGIRGGGYSGIRGGGS) has biased composition (gly residues). 2 stretches are compositionally biased toward polar residues: residues 964-977 (SHNN…NPND) and 1014-1031 (RNNT…EQGS).

Belongs to the TRAFAC class myosin-kinesin ATPase superfamily. Kinesin family. Kinesin subfamily. Oligomer composed of two heavy chains and two light chains.

The protein localises to the cytoplasm. It is found in the cytoskeleton. In terms of biological role, kinesin is a microtubule-associated force-producing protein that may play a role in organelle transport. This Strongylocentrotus purpuratus (Purple sea urchin) protein is Kinesin heavy chain.